The sequence spans 481 residues: Deoxyribodipyrimidine photo-lyase (481 aa).

The Photolyase/cryptochrome alpha/beta domain maps to methionine 1–histidine 136. Tyrosine 228 provides a ligand contact to FAD. Arginine 232 is a binding site for DNA. Residue threonine 240–serine 244 participates in FAD binding. 2 interaction with DNA regions span residues glutamine 283–tyrosine 290 and asparagine 349–arginine 350. Residue aspartate 380–aspartate 382 coordinates FAD. Glutamine 412 is a binding site for DNA.

The protein belongs to the DNA photolyase class-1 family. Monomer. FAD is required as a cofactor. Coenzyme F420-(gamma-Glu)n serves as cofactor.

It carries out the reaction cyclobutadipyrimidine (in DNA) = 2 pyrimidine residues (in DNA).. Functionally, involved in repair of UV radiation-induced DNA damage. Catalyzes the light-dependent monomerization (300-600 nm) of cyclobutyl pyrimidine dimers (in cis-syn configuration), which are formed between adjacent bases on the same DNA strand upon exposure to ultraviolet radiation. The polypeptide is Deoxyribodipyrimidine photo-lyase (phr) (Halobacterium salinarum (strain ATCC 700922 / JCM 11081 / NRC-1) (Halobacterium halobium)).